Consider the following 638-residue polypeptide: MNATEQFLAANAHVDEAAVQPLPNSRKIYVEGSRPDIRVPMREVSQDDTPTAFGGEKNPPIYVYDCSGPYSDPAAKIDIRSGLPALRAQWIAERGDVEALADLSSEFGRQRAADPKLDELRFPGLHRKPLRAKAGQNVSQMHYARRGIITPEMEYVAIRENNNRRAYIESLKATGPMGNRMADILGRQHKGQDFGASIPEEITPEFVRSEIARGRAIIPNNINHPESEPMIIGRNFLVKINANIGNSALGSSIQEEVEKMTWSIRWGGDTVMDLSTGKNIHETREWIIRNSPVPIGTVPIYQALEKVNGKAEDLTWEIFRDTLIEQAEQGVDYFTIHAGVLLRYVPMTANRLTGIVSRGGSIMAKWCLAHHKESFLYTHFEEICEIMKAYDVAFSLGDGLRPGSIYDANDEAQLGELETLGELTKIAWKHDVQVIIEGPGHVPMHMIKENMDLQLKHCDEAPFYTLGPLTTDIAPGYDHITSGIGAAMIGWYGTAMLCYVTPKEHLGLPDKDDVKEGIITYKLAAHAADLAKGHPGAQIRDNALSKARFEFRWDDQFNLGLDPDKAREFHDETLPKESAKVAHFCSMCGPHFCSMKITQEVREFAAQQGLDEAAALEKGMEVKSVEFVKAGAEVYSKI.

Residues N243, M272, Y301, H337, 357-359 (SRG), 398-401 (DGLR), and E437 contribute to the substrate site. H441 contacts Zn(2+). Y464 contributes to the substrate binding site. Position 505 (H505) interacts with Zn(2+). 3 residues coordinate [4Fe-4S] cluster: C585, C588, and C593.

It belongs to the ThiC family. Homodimer. [4Fe-4S] cluster is required as a cofactor.

The enzyme catalyses 5-amino-1-(5-phospho-beta-D-ribosyl)imidazole + S-adenosyl-L-methionine = 4-amino-2-methyl-5-(phosphooxymethyl)pyrimidine + CO + 5'-deoxyadenosine + formate + L-methionine + 3 H(+). It participates in cofactor biosynthesis; thiamine diphosphate biosynthesis. Catalyzes the synthesis of the hydroxymethylpyrimidine phosphate (HMP-P) moiety of thiamine from aminoimidazole ribotide (AIR) in a radical S-adenosyl-L-methionine (SAM)-dependent reaction. In Dechloromonas aromatica (strain RCB), this protein is Phosphomethylpyrimidine synthase.